The chain runs to 152 residues: Deoxyuridine 5'-triphosphate nucleotidohydrolase (152 aa).

Substrate is bound by residues 71–73 (RSG), N84, 88–90 (LID), and M98.

The protein belongs to the dUTPase family. Mg(2+) is required as a cofactor.

The catalysed reaction is dUTP + H2O = dUMP + diphosphate + H(+). Its pathway is pyrimidine metabolism; dUMP biosynthesis; dUMP from dCTP (dUTP route): step 2/2. Functionally, this enzyme is involved in nucleotide metabolism: it produces dUMP, the immediate precursor of thymidine nucleotides and it decreases the intracellular concentration of dUTP so that uracil cannot be incorporated into DNA. In Pectobacterium carotovorum subsp. carotovorum (strain PC1), this protein is Deoxyuridine 5'-triphosphate nucleotidohydrolase.